A 185-amino-acid chain; its full sequence is Peptide deformylase (185 aa).

Fe cation-binding residues include Cys109 and His152. Residue Glu153 is part of the active site. Fe cation is bound at residue His156.

It belongs to the polypeptide deformylase family. Fe(2+) is required as a cofactor.

It carries out the reaction N-terminal N-formyl-L-methionyl-[peptide] + H2O = N-terminal L-methionyl-[peptide] + formate. Removes the formyl group from the N-terminal Met of newly synthesized proteins. Requires at least a dipeptide for an efficient rate of reaction. N-terminal L-methionine is a prerequisite for activity but the enzyme has broad specificity at other positions. This chain is Peptide deformylase, found in Roseiflexus sp. (strain RS-1).